Here is a 172-residue protein sequence, read N- to C-terminus: Adenine phosphoribosyltransferase (172 aa).

Belongs to the purine/pyrimidine phosphoribosyltransferase family. Homodimer.

It localises to the cytoplasm. It carries out the reaction AMP + diphosphate = 5-phospho-alpha-D-ribose 1-diphosphate + adenine. The protein operates within purine metabolism; AMP biosynthesis via salvage pathway; AMP from adenine: step 1/1. Functionally, catalyzes a salvage reaction resulting in the formation of AMP, that is energically less costly than de novo synthesis. This Clostridium botulinum (strain Alaska E43 / Type E3) protein is Adenine phosphoribosyltransferase.